Here is a 217-residue protein sequence, read N- to C-terminus: Small ribosomal subunit protein uS3 (217 aa).

In terms of domain architecture, KH type-2 spans 38–106 (IRKFIQKELA…QVHINIVEIK (69 aa)).

It belongs to the universal ribosomal protein uS3 family. As to quaternary structure, part of the 30S ribosomal subunit. Forms a tight complex with proteins S10 and S14.

Binds the lower part of the 30S subunit head. Binds mRNA in the 70S ribosome, positioning it for translation. The sequence is that of Small ribosomal subunit protein uS3 from Streptococcus thermophilus (strain CNRZ 1066).